The following is a 1013-amino-acid chain: Ephrin type-B receptor 6 (1013 aa).

Positions 1–31 (MASENTAGSGSRVAGMVYSLWLLVLGPSVLA) are cleaved as a signal peptide. At 32–590 (LEEVLLDTTG…LPEKLSLVIG (559 aa)) the chain is on the extracellular side. Residues 33–231 (EEVLLDTTGE…FSYTCPSVLR (199 aa)) form the Eph LBD domain. Fibronectin type-III domains are found at residues 363-478 (PPSA…TSHE) and 479-574 (VPSA…TLPQ). An N-linked (GlcNAc...) asparagine glycan is attached at asparagine 472. Residues 591 to 611 (SILGALAFLLLAAITVLAVIF) traverse the membrane as a helical segment. Residues 612 to 1013 (QRKRRGTGYT…HLRQPGSVEV (402 aa)) lie on the Cytoplasmic side of the membrane. A Protein kinase domain is found at 662–911 (IKIEEVIGAG…QLVAAFDKMI (250 aa)). 668–676 (IGAGSFGEV) contacts ATP. Positions 940–1004 (PCLDSPQAWL…LHNIQLLQQH (65 aa)) constitute an SAM domain. The PDZ-binding motif lies at 1011–1013 (VEV).

The protein belongs to the protein kinase superfamily. Tyr protein kinase family. Ephrin receptor subfamily. Interacts with CBL and EPHB1. Interacts with FYN; this interaction takes place in a ligand-independent manner. Post-translationally, ligand-binding increases phosphorylation on tyrosine residues. Phosphorylation on tyrosine residues is mediated by transphosphorylation by the catalytically active EPHB1 in a ligand-independent manner. Tyrosine phosphorylation of the receptor may act as a switch on the functional transition from cell adhesion/attraction to de-adhesion/repulsion.

Its subcellular location is the membrane. Kinase-defective receptor for members of the ephrin-B family. Binds to ephrin-B1 and ephrin-B2. Modulates cell adhesion and migration by exerting both positive and negative effects upon stimulation with ephrin-B2. Inhibits JNK activation, T-cell receptor-induced IL-2 secretion and CD25 expression upon stimulation with ephrin-B2. The protein is Ephrin type-B receptor 6 (Ephb6) of Rattus norvegicus (Rat).